Reading from the N-terminus, the 172-residue chain is Stellate protein CG33243 (172 aa).

It belongs to the casein kinase 2 subunit beta family. In terms of assembly, interacts in vitro with the casein kinase 2 alpha subunit (CkII-alpha). The relevance of such interaction is however unclear in vivo. As to expression, probably not expressed in wild-type flies. In males lacking the Y chromosome, it is testis-specific and constitutes the main component of star-shaped crystals.

Functionally, unknown. In males lacking the Y chromosome, its strong overexpression leads to the appearance of proteinaceous star-shaped crystals in the primary spermatocytes causing meiotic drive, possibly by interfering with normal casein kinase 2 activity. This Drosophila melanogaster (Fruit fly) protein is Stellate protein CG33243 (Ste:CG33243).